We begin with the raw amino-acid sequence, 113 residues long: Large ribosomal subunit protein uL22 (113 aa).

The protein belongs to the universal ribosomal protein uL22 family. As to quaternary structure, part of the 50S ribosomal subunit.

Its function is as follows. This protein binds specifically to 23S rRNA; its binding is stimulated by other ribosomal proteins, e.g. L4, L17, and L20. It is important during the early stages of 50S assembly. It makes multiple contacts with different domains of the 23S rRNA in the assembled 50S subunit and ribosome. In terms of biological role, the globular domain of the protein is located near the polypeptide exit tunnel on the outside of the subunit, while an extended beta-hairpin is found that lines the wall of the exit tunnel in the center of the 70S ribosome. This chain is Large ribosomal subunit protein uL22, found in Desulforudis audaxviator (strain MP104C).